Here is a 122-residue protein sequence, read N- to C-terminus: Putative syntaxin 6 (122 aa).

Over 1-100 (MSNYRYSKLN…AKLTHLEDES (100 aa)) the chain is Cytoplasmic. The region spanning 31–93 (EQIIQEQDDE…DTAMKKMAKL (63 aa)) is the t-SNARE coiled-coil homology domain. A helical; Anchor for type IV membrane protein membrane pass occupies residues 101-121 (SQCKMIMVLSALLFFLVFVLL). Position 122 (V122) is a topological domain, extracellular.

This sequence belongs to the syntaxin family.

The protein localises to the membrane. In terms of biological role, SNARE promoting movement of transport vesicles to target membranes. Potentially functions in retrograde trafficking and in the endocytic recycling pathway. The protein is Putative syntaxin 6 (syx-6) of Caenorhabditis elegans.